Reading from the N-terminus, the 683-residue chain is Actin-binding LIM protein 3 (683 aa).

Met-1 bears the N-acetylmethionine mark. LIM zinc-binding domains follow at residues 21–80 (IQCY…LYGT), 80–140 (TRCD…MASS), 149–208 (SHCA…QFGI), and 208–268 (IKCE…ARAE). Ser-277, Ser-280, Ser-282, Ser-286, Ser-290, Ser-337, Ser-372, and Ser-373 each carry phosphoserine. Residues 372–472 (SSPGYIDSPT…EDISQTSKYS (101 aa)) form a disordered region. A Phosphotyrosine modification is found at Tyr-376. Phosphoserine is present on residues Ser-379 and Ser-388. 3 stretches are compositionally biased toward polar residues: residues 380 to 393 (PTYS…TFSR), 406 to 426 (GRSS…TSYQ), and 454 to 471 (STAT…TSKY). A phosphoserine mark is found at Ser-493, Ser-503, and Ser-504. Thr-543 is subject to Phosphothreonine. A phosphoserine mark is found at Ser-567, Ser-576, and Ser-607. Positions 615 to 683 (MREYKIYPYE…NELKKQARLF (69 aa)) constitute an HP domain. Arg-631 is subject to Omega-N-methylarginine.

As to quaternary structure, directly interacts with F-actin and ABRA. Expressed predominantly in heart and brain.

The protein localises to the cytoplasm. May act as scaffold protein. May stimulate ABRA activity and ABRA-dependent SRF transcriptional activity. The protein is Actin-binding LIM protein 3 (ABLIM3) of Homo sapiens (Human).